A 412-amino-acid chain; its full sequence is Cellobiose 2-epimerase (412 aa).

Belongs to the cellobiose 2-epimerase family.

The catalysed reaction is D-cellobiose = beta-D-glucosyl-(1-&gt;4)-D-mannopyranose. Functionally, catalyzes the reversible epimerization of cellobiose to 4-O-beta-D-glucopyranosyl-D-mannose (Glc-Man). Can also use lactose, epilactose, mannobiose and cellotriose. Highly specific for oligosaccharides linked by the beta-1,4-glycosidic linkage. Shows preference for lactose. In Rhodothermus marinus (Rhodothermus obamensis), this protein is Cellobiose 2-epimerase (ce).